A 385-amino-acid polypeptide reads, in one-letter code: Sulfoquinovose monooxygenase (385 aa).

The disordered stretch occupies residues 366 to 385; that stretch reads AYGRVPSETPATPLGNGERH.

This sequence belongs to the SsuD family. Homodimer.

It carries out the reaction 6-sulfo-D-quinovose + FMNH2 + O2 = 6-dehydro-D-glucose + FMN + sulfite + H2O + 2 H(+). Functionally, part of the sulfoquinovose monooxygenase (sulfo-SMO) pathway, a D-sulfoquinovose degradation pathway that enables the complete utilization of all carbons within sulfoquinovose (SQ) with concomitant production of inorganic sulfite. Catalyzes the oxidative desulfurization of sulfoquinovose to sulfite and 6-dehydro-D-glucose. Is highly specific for sulfoquinovose and cannot use sulfoquinovosyl glycerol. FMNH(2) is provided by the FMN reductase SmoA. This chain is Sulfoquinovose monooxygenase, found in Agrobacterium fabrum (strain C58 / ATCC 33970) (Agrobacterium tumefaciens (strain C58)).